Consider the following 300-residue polypeptide: Ribonuclease HIII (300 aa).

The 215-residue stretch at 86–300 folds into the RNase H type-2 domain; the sequence is RPRLGVDESG…FNEICDSASA (215 aa). The a divalent metal cation site is built by Asp-92, Glu-93, and Asp-196.

It belongs to the RNase HII family. RnhC subfamily. The cofactor is Mn(2+). It depends on Mg(2+) as a cofactor.

Its subcellular location is the cytoplasm. The catalysed reaction is Endonucleolytic cleavage to 5'-phosphomonoester.. In terms of biological role, endonuclease that specifically degrades the RNA of RNA-DNA hybrids. In Chlamydia caviae (strain ATCC VR-813 / DSM 19441 / 03DC25 / GPIC) (Chlamydophila caviae), this protein is Ribonuclease HIII.